A 239-amino-acid polypeptide reads, in one-letter code: Purine nucleoside phosphorylase DeoD-type (239 aa).

Residue histidine 5 participates in a purine D-ribonucleoside binding. Residues glycine 21, arginine 25, arginine 44, and 88-91 each bind phosphate; that span reads RVGS. A purine D-ribonucleoside-binding positions include 180-182 and 204-205; these read EME and SD. Aspartate 205 (proton donor) is an active-site residue.

Belongs to the PNP/UDP phosphorylase family. Homohexamer; trimer of homodimers.

The enzyme catalyses a purine D-ribonucleoside + phosphate = a purine nucleobase + alpha-D-ribose 1-phosphate. The catalysed reaction is a purine 2'-deoxy-D-ribonucleoside + phosphate = a purine nucleobase + 2-deoxy-alpha-D-ribose 1-phosphate. Its function is as follows. Catalyzes the reversible phosphorolytic breakdown of the N-glycosidic bond in the beta-(deoxy)ribonucleoside molecules, with the formation of the corresponding free purine bases and pentose-1-phosphate. This Salmonella heidelberg (strain SL476) protein is Purine nucleoside phosphorylase DeoD-type.